Here is a 73-residue protein sequence, read N- to C-terminus: Sec-independent protein translocase protein TatA (73 aa).

Residues 1–21 (MGSFSIWHWVIVLVVVVLIFG) traverse the membrane as a helical segment. Positions 43–73 (MKSEGEDAAQTPPAAQKEGGRVIDAEPADKK) are disordered. Positions 60–73 (EGGRVIDAEPADKK) are enriched in basic and acidic residues.

This sequence belongs to the TatA/E family. As to quaternary structure, the Tat system comprises two distinct complexes: a TatABC complex, containing multiple copies of TatA, TatB and TatC subunits, and a separate TatA complex, containing only TatA subunits. Substrates initially bind to the TatABC complex, which probably triggers association of the separate TatA complex to form the active translocon.

Its subcellular location is the cell inner membrane. Functionally, part of the twin-arginine translocation (Tat) system that transports large folded proteins containing a characteristic twin-arginine motif in their signal peptide across membranes. TatA could form the protein-conducting channel of the Tat system. The chain is Sec-independent protein translocase protein TatA from Laribacter hongkongensis (strain HLHK9).